A 449-amino-acid chain; its full sequence is Ribosomal protein uS12 methylthiotransferase RimO (449 aa).

The MTTase N-terminal domain maps to 7-123 (QKVSMVSLGC…VAEILAEHHA (117 aa)). 6 residues coordinate [4Fe-4S] cluster: cysteine 16, cysteine 52, cysteine 86, cysteine 161, cysteine 165, and cysteine 168. The Radical SAM core domain maps to 147–377 (SSPGWYAYLK…MKTQARVSFR (231 aa)). The 69-residue stretch at 380-448 (RAMVGQTEQV…DYDLVAEMIE (69 aa)) folds into the TRAM domain.

This sequence belongs to the methylthiotransferase family. RimO subfamily. [4Fe-4S] cluster serves as cofactor.

It is found in the cytoplasm. The catalysed reaction is L-aspartate(89)-[ribosomal protein uS12]-hydrogen + (sulfur carrier)-SH + AH2 + 2 S-adenosyl-L-methionine = 3-methylsulfanyl-L-aspartate(89)-[ribosomal protein uS12]-hydrogen + (sulfur carrier)-H + 5'-deoxyadenosine + L-methionine + A + S-adenosyl-L-homocysteine + 2 H(+). In terms of biological role, catalyzes the methylthiolation of an aspartic acid residue of ribosomal protein uS12. This is Ribosomal protein uS12 methylthiotransferase RimO from Trichlorobacter lovleyi (strain ATCC BAA-1151 / DSM 17278 / SZ) (Geobacter lovleyi).